Here is a 793-residue protein sequence, read N- to C-terminus: Wall-associated receptor kinase-like 18 (793 aa).

The first 28 residues, methionine 1–alanine 28, serve as a signal peptide directing secretion. Over cysteine 29–alanine 378 the chain is Extracellular. 6 N-linked (GlcNAc...) asparagine glycosylation sites follow: asparagine 60, asparagine 130, asparagine 170, asparagine 238, asparagine 285, and asparagine 304. The interval cysteine 312–cysteine 371 is atypical EGF-like. 3 cysteine pairs are disulfide-bonded: cysteine 314/cysteine 327, cysteine 349/cysteine 362, and cysteine 356/cysteine 371. The helical transmembrane segment at isoleucine 379–leucine 399 threads the bilayer. Over arginine 400 to tryptophan 793 the chain is Cytoplasmic. Residues phenylalanine 453–isoleucine 728 form the Protein kinase domain. Residues leucine 459–valine 467 and lysine 481 each bind ATP. Tyrosine 526 is modified (phosphotyrosine). Residue aspartate 579 is the Proton acceptor of the active site. Phosphothreonine is present on residues threonine 613 and threonine 618. Tyrosine 626 is subject to Phosphotyrosine. The interval glutamate 733 to threonine 757 is disordered. A compositionally biased stretch (acidic residues) spans aspartate 742 to valine 754.

This sequence belongs to the protein kinase superfamily. Ser/Thr protein kinase family.

It localises to the membrane. The enzyme catalyses L-seryl-[protein] + ATP = O-phospho-L-seryl-[protein] + ADP + H(+). The catalysed reaction is L-threonyl-[protein] + ATP = O-phospho-L-threonyl-[protein] + ADP + H(+). In terms of biological role, serine/threonine-protein kinase that may function as a signaling receptor of extracellular matrix component. This is Wall-associated receptor kinase-like 18 (WAKL18) from Arabidopsis thaliana (Mouse-ear cress).